The chain runs to 190 residues: DNA dC-&gt;dU-editing enzyme APOBEC-3C (190 aa).

The CMP/dCMP-type deaminase domain maps to 29-138 (DRNETWLCFT…TDYQEGLRSL (110 aa)). His66, Cys97, and Cys100 together coordinate Zn(2+).

The protein belongs to the cytidine and deoxycytidylate deaminase family. Homodimer. Interacts with TRIB3. Requires Zn(2+) as cofactor.

The protein localises to the nucleus. The protein resides in the cytoplasm. The enzyme catalyses a 2'-deoxycytidine in single-stranded DNA + H2O + H(+) = a 2'-deoxyuridine in single-stranded DNA + NH4(+). DNA deaminase (cytidine deaminase) which acts as an inhibitor of retrovirus replication and retrotransposon mobility via deaminase-dependent and -independent mechanisms. May also play a role in the epigenetic regulation of gene expression through the process of active DNA demethylation. The chain is DNA dC-&gt;dU-editing enzyme APOBEC-3C (APOBEC3C) from Gorilla gorilla gorilla (Western lowland gorilla).